Consider the following 251-residue polypeptide: Cell division protein ZapD (251 aa).

It belongs to the ZapD family. In terms of assembly, interacts with FtsZ.

The protein localises to the cytoplasm. Functionally, cell division factor that enhances FtsZ-ring assembly. Directly interacts with FtsZ and promotes bundling of FtsZ protofilaments, with a reduction in FtsZ GTPase activity. The sequence is that of Cell division protein ZapD from Paraburkholderia phymatum (strain DSM 17167 / CIP 108236 / LMG 21445 / STM815) (Burkholderia phymatum).